Consider the following 462-residue polypeptide: tRNA(Ile2) 2-agmatinylcytidine synthetase TiaS (462 aa).

Belongs to the TiaS family.

It is found in the cytoplasm. The enzyme catalyses cytidine(34) in tRNA(Ile2) + agmatine + ATP + H2O = 2-agmatinylcytidine(34) in tRNA(Ile2) + AMP + 2 phosphate + 2 H(+). ATP-dependent agmatine transferase that catalyzes the formation of 2-agmatinylcytidine (agm2C) at the wobble position (C34) of tRNA(Ile2), converting the codon specificity from AUG to AUA. This chain is tRNA(Ile2) 2-agmatinylcytidine synthetase TiaS, found in Haloquadratum walsbyi (strain DSM 16790 / HBSQ001).